Here is a 506-residue protein sequence, read N- to C-terminus: MNTMTLTPGQLSLSQLYDVWRHPVQLRLDASAIDGINASVACVNDIVAEGRTAYGINTGFGLLAQTRIADEDLQNLQRSLVLSHAAGVGDPLDDAMVRLIMVLKINSLARGFSGIRLSVIEALIALVNAGVYPLIPAKGSVGASGDLAPLAHLSLTLLGEGKARWQGEWLPAQAALKKAGLEPVALAAKEGLALLNGTQASTAFALRGLFEAQELFASAVVCGALTTEAVLGSCRPFDARIHAARGQQGQIDVARLFRHLLTDTSAIAESHHHCHKVQDPYSLRCQPQVMGACLTQLRQTKEVLLAEANAVSDNPLVFAEAGEVISGGNFHAEPVAMAADNLALAIAEIGALSERRITLMMDKHMSQLPPFLVKNGGVNSGFMIAQVTAAALASENKALAHPHSVDSLPTSANQEDHVSMAPAAGRRLWEMAANTRGVIAVEWLAACQGIDLREGLTSSPLLEQARQTLRERVAHYTQDRFFAPDIECATTLLAQGALQRLVPDFM.

Residues 143-145 constitute a cross-link (5-imidazolinone (Ala-Gly)); the sequence is ASG. A 2,3-didehydroalanine (Ser) modification is found at Ser-144.

It belongs to the PAL/histidase family. Post-translationally, contains an active site 4-methylidene-imidazol-5-one (MIO), which is formed autocatalytically by cyclization and dehydration of residues Ala-Ser-Gly.

Its subcellular location is the cytoplasm. The catalysed reaction is L-histidine = trans-urocanate + NH4(+). The protein operates within amino-acid degradation; L-histidine degradation into L-glutamate; N-formimidoyl-L-glutamate from L-histidine: step 1/3. The polypeptide is Histidine ammonia-lyase (Salmonella typhi).